A 1025-amino-acid polypeptide reads, in one-letter code: Multidrug resistance protein MdtC (1025 aa).

12 helical membrane passes run 3–23 (FFAL…AITL), 333–353 (EVEQ…FLFL), 360–380 (LIPA…MYLC), 387–407 (LSLM…IVVL), 431–451 (VGFT…PLLL), 463–483 (FAVT…TLTP), 528–548 (IVGL…ITIP), 853–873 (VILI…LYES), 875–895 (VHPL…LLAL), 897–917 (LFDA…IGIV), 953–973 (PIMM…ISSG), and 984–1004 (ITIV…TPVV).

The protein belongs to the resistance-nodulation-cell division (RND) (TC 2.A.6) family. MdtC subfamily. As to quaternary structure, part of a tripartite efflux system composed of MdtA, MdtB and MdtC. MdtC forms a heteromultimer with MdtB.

Its subcellular location is the cell inner membrane. The chain is Multidrug resistance protein MdtC from Enterobacter sp. (strain 638).